Reading from the N-terminus, the 687-residue chain is MAEELVLERCDLELETNGRDHHTADLCREKLVVRRGQPFWLTLHFEGRNYEASVDSLTFSVVTGPAPSQEAGTKARFPLRDAVEEGDWTATVVDQQDCTLSLQLTTPANAPIGLYRLSLEASTGYQGSSFVLGHFILLFNAWCPADAVYLDSEEERQEYVLTQQGFIYQGSAKFIKNIPWNFGQFEDGILDICLILLDVNPKFLKNAGRDCSRRSSPVYVGRVVSGMVNCNDDQGVLLGRWDNNYGDGVSPMSWIGSVDILRRWKNHGCQRVKYGQCWVFAAVACTVLRCLGIPTRVVTNYNSAHDQNSNLLIEYFRNEFGEIQGDKSEMIWNFHCWVESWMTRPDLQPGYEGWQALDPTPQEKSEGTYCCGPVPVRAIKEGDLSTKYDAPFVFAEVNADVVDWIQQDDGSVHKSINRSLIVGLKISTKSVGRDEREDITHTYKYPEGSSEEREAFTRANHLNKLAEKEETGMAMRIRVGQSMNMGSDFDVFAHITNNTAEEYVCRLLLCARTVSYNGILGPECGTKYLLNLNLEPFSEKSVPLCILYEKYRDCLTESNLIKVRALLVEPVINSYLLAERDLYLENPEIKIRILGEPKQKRKLVAEVSLQNPLPVALEGCTFTVEGAGLTEEQKTVEIPDPVEAGEEVKVRMDLLPLHMGLHKLVVNFESDKLKAVKGFRNVIIGPA.

At Ala-2 the chain carries N-acetylalanine. Ser-60 is subject to Phosphoserine. 2 disulfide bridges follow: Cys-230-Cys-370 and Cys-370-Cys-371. Residues Cys-277, His-335, and Asp-358 contribute to the active site. Residues Asn-398, Asp-400, Glu-437, Glu-447, and Glu-452 each coordinate Ca(2+). At Lys-468 the chain carries N6-acetyllysine. 476–483 contacts GTP; sequence RIRVGQSM. Position 539 (Glu-539) interacts with Ca(2+). 580 to 583 provides a ligand contact to GTP; that stretch reads RDLY. An Isoglutamyl lysine isopeptide (Gln-Lys) (interchain with K-?) cross-link involves residue Gln-633.

This sequence belongs to the transglutaminase superfamily. Transglutaminase family. Monomer. Interacts with phospholipase C; promoting alpha-1 adrenergic receptor signaling. Interacts with PLCD1. As to quaternary structure, homooligomer. It depends on Ca(2+) as a cofactor. In terms of processing, disulfide bond formation inactivates the calcium-dependent acyltransferase activity. Cys-370 can form disulfide bonds with both Cys-230 and Cys-371: formation of a disulfide bond between Cys-230 and Cys-370 facilitates formation of the disulfide between Cys-370 and Cys-371, which promotes inactivation of the acyltransferase activity. May also form interchain disulfids between Cys-230 and Cys-370. Ca(2+) protects against disulfide bond formation and inactivation. Auto-transglutaminated: Forms covalent cross-links mediated by transglutaminase between Gln-633 and the epsilon-amino group of a lysine residue of itself or HMGB1, forming homopolymers and heteropolymers, respectively. Post-translationally, S-nitrosylated, leading to inactivation of the acyltransferase activity.

It localises to the cytoplasm. It is found in the cytosol. The protein localises to the nucleus. Its subcellular location is the chromosome. The protein resides in the secreted. It localises to the extracellular space. It is found in the extracellular matrix. The protein localises to the cell membrane. Its subcellular location is the mitochondrion. The protein resides in the perinuclear region. The enzyme catalyses L-glutaminyl-[protein] + L-lysyl-[protein] = [protein]-L-lysyl-N(6)-5-L-glutamyl-[protein] + NH4(+). It carries out the reaction L-glutaminyl-[protein] + serotonin = 5-serotonyl-L-glutamyl-[protein] + NH4(+). It catalyses the reaction L-glutaminyl-[protein] + dopamine = 5-dopaminyl-L-glutamyl-[protein] + NH4(+). The catalysed reaction is L-glutaminyl-[protein] + histamine = 5-histaminyl-L-glutamyl-[protein] + NH4(+). The enzyme catalyses L-glutaminyl-[protein] + (R)-noradrenaline = 5-(R)-noradrenalinyl-L-glutamyl-[protein] + NH4(+). It carries out the reaction L-glutaminyl-[protein] + H2O = L-glutamyl-[protein] + NH4(+). Acyltransferase activity is regulated by the binding of GTP and Ca(2+): inactivated by GTP, which stabilizes its closed structure, thereby obstructing the accessibility of substrates to the active sites. In contrast, Ca(2+) acts as a cofactor by inducing conformational change to the active open form. In absence of Ca(2+), Mg(2+) may bind Ca(2+)-binding sites, promoting GTP-binding and subsequent inhibition of the acyltransferase activity. Extracellularly reduced and activated by CLIC3. Specifically inhibited by compound VA4 ((S)-Benzyl (6-Acrylamido-1-(4-((5-(dimethylamino)naphthalen-1-yl)sulfonyl)piperazin-1-yl)-1-oxohexan-2-yl)carbamate), which specifically abolishes both the transamidation and GTP-binding activities. In terms of biological role, calcium-dependent acyltransferase that catalyzes the formation of covalent bonds between peptide-bound glutamine and various primary amines, such as gamma-amino group of peptide-bound lysine, or mono- and polyamines, thereby producing cross-linked or aminated proteins, respectively. Involved in many biological processes, such as bone development, angiogenesis, wound healing, cellular differentiation, chromatin modification and apoptosis. Acts as a protein-glutamine gamma-glutamyltransferase by mediating the cross-linking of proteins, such as ACO2, HSPB6, FN1, HMGB1, RAP1GDS1, SLC25A4/ANT1, SPP1 and WDR54. Under physiological conditions, the protein cross-linking activity is inhibited by GTP; inhibition is relieved by Ca(2+) in response to various stresses. When secreted, catalyzes cross-linking of proteins of the extracellular matrix, such as FN1 and SPP1 resulting in the formation of scaffolds. Plays a key role during apoptosis, both by (1) promoting the cross-linking of cytoskeletal proteins resulting in condensation of the cytoplasm, and by (2) mediating cross-linking proteins of the extracellular matrix, resulting in the irreversible formation of scaffolds that stabilize the integrity of the dying cells before their clearance by phagocytosis, thereby preventing the leakage of harmful intracellular components. In addition to protein cross-linking, can use different monoamine substrates to catalyze a vast array of protein post-translational modifications: mediates aminylation of serotonin, dopamine, noradrenaline or histamine into glutamine residues of target proteins to generate protein serotonylation, dopaminylation, noradrenalinylation or histaminylation, respectively. Mediates protein serotonylation of small GTPases during activation and aggregation of platelets, leading to constitutive activation of these GTPases. Plays a key role in chromatin organization by mediating serotonylation and dopaminylation of histone H3. Catalyzes serotonylation of 'Gln-5' of histone H3 (H3Q5ser) during serotonergic neuron differentiation, thereby facilitating transcription. Acts as a mediator of neurotransmission-independent role of nuclear dopamine in ventral tegmental area (VTA) neurons: catalyzes dopaminylation of 'Gln-5' of histone H3 (H3Q5dop), thereby regulating relapse-related transcriptional plasticity in the reward system. Regulates vein remodeling by mediating serotonylation and subsequent inactivation of ATP2A2/SERCA2. Also acts as a protein deamidase by mediating the side chain deamidation of specific glutamine residues of proteins to glutamate. Catalyzes specific deamidation of protein gliadin, a component of wheat gluten in the diet. May also act as an isopeptidase cleaving the previously formed cross-links. Also able to participate in signaling pathways independently of its acyltransferase activity: acts as a signal transducer in alpha-1 adrenergic receptor-mediated stimulation of phospholipase C-delta (PLCD) activity and is required for coupling alpha-1 adrenergic agonists to the stimulation of phosphoinositide lipid metabolism. Has cytotoxic activity: is able to induce apoptosis independently of its acyltransferase activity. This is Protein-glutamine gamma-glutamyltransferase 2 from Homo sapiens (Human).